A 51-amino-acid polypeptide reads, in one-letter code: Large ribosomal subunit protein eL39 (51 aa).

This sequence belongs to the eukaryotic ribosomal protein eL39 family.

The sequence is that of Large ribosomal subunit protein eL39 (RpL39) from Drosophila melanogaster (Fruit fly).